Consider the following 294-residue polypeptide: MQHFRDKIVVVKYGGNAMVDDDLKAAFAADMVFLRTVGAKPVVVHGGGPQISEMLNRVGLQGEFKGGFRVTTPEVMDIVRMVLFGQVGRDLVGLINSHGPYAVGTSGEDAGLFTAQKRMVNIDGVPTDIGLVGDIINVDASSLMDIIEAGRIPVVSTIAPGEDGQIYNINADTAAGALAAAIGAERLLVLTNVEGLYTDWPDKSSLVSKIKATELEAILPGLDSGMIPKMESCLNAVRGGVSAAHVIDGRIAHSVLLELLTMGGIGTMVLPDVFDRENYPEGTVFRKDDKDGEL.

Residues 47–48 (GG), arginine 69, and asparagine 168 each bind substrate.

The protein belongs to the acetylglutamate kinase family. ArgB subfamily.

Its subcellular location is the cytoplasm. The enzyme catalyses N-acetyl-L-glutamate + ATP = N-acetyl-L-glutamyl 5-phosphate + ADP. It participates in amino-acid biosynthesis; L-arginine biosynthesis; N(2)-acetyl-L-ornithine from L-glutamate: step 2/4. In terms of biological role, catalyzes the ATP-dependent phosphorylation of N-acetyl-L-glutamate. This chain is Acetylglutamate kinase, found in Corynebacterium glutamicum (strain ATCC 13032 / DSM 20300 / JCM 1318 / BCRC 11384 / CCUG 27702 / LMG 3730 / NBRC 12168 / NCIMB 10025 / NRRL B-2784 / 534).